The sequence spans 197 residues: Imidazoleglycerol-phosphate dehydratase (197 aa).

The protein belongs to the imidazoleglycerol-phosphate dehydratase family.

The protein resides in the cytoplasm. The catalysed reaction is D-erythro-1-(imidazol-4-yl)glycerol 3-phosphate = 3-(imidazol-4-yl)-2-oxopropyl phosphate + H2O. It participates in amino-acid biosynthesis; L-histidine biosynthesis; L-histidine from 5-phospho-alpha-D-ribose 1-diphosphate: step 6/9. The polypeptide is Imidazoleglycerol-phosphate dehydratase (Erythrobacter litoralis (strain HTCC2594)).